We begin with the raw amino-acid sequence, 199 residues long: FMN-dependent NADH:quinone oxidoreductase 2 (199 aa).

FMN-binding positions include Ser-10, Ser-17–Ser-19, and Thr-135–Gly-138.

This sequence belongs to the azoreductase type 1 family. As to quaternary structure, homodimer. FMN is required as a cofactor.

It catalyses the reaction 2 a quinone + NADH + H(+) = 2 a 1,4-benzosemiquinone + NAD(+). The enzyme catalyses N,N-dimethyl-1,4-phenylenediamine + anthranilate + 2 NAD(+) = 2-(4-dimethylaminophenyl)diazenylbenzoate + 2 NADH + 2 H(+). Quinone reductase that provides resistance to thiol-specific stress caused by electrophilic quinones. Its function is as follows. Also exhibits azoreductase activity. Catalyzes the reductive cleavage of the azo bond in aromatic azo compounds to the corresponding amines. This Mesoplasma florum (strain ATCC 33453 / NBRC 100688 / NCTC 11704 / L1) (Acholeplasma florum) protein is FMN-dependent NADH:quinone oxidoreductase 2.